The sequence spans 428 residues: Protein clpf-1 (428 aa).

ATP is bound by residues Glu16 and Arg56. The disordered stretch occupies residues 99–118 (KKREEQAVSNSSKPKGPRLL). 124–129 (DVGKTT) contributes to the ATP binding site.

Belongs to the Clp1 family. Clp1 subfamily.

The protein localises to the nucleus. Its function is as follows. Required for endonucleolytic cleavage during polyadenylation-dependent pre-mRNA 3'-end formation. The chain is Protein clpf-1 from Caenorhabditis briggsae.